The sequence spans 381 residues: Prokineticin receptor 2 (381 aa).

Over 1–51 (MGPQNRNTSFAPDLNPPQDHVSLNYSYGDYDLPLGEDEDVTKTQTFFAAKI) the chain is Extracellular. 2 N-linked (GlcNAc...) asparagine glycosylation sites follow: N7 and N24. A helical transmembrane segment spans residues 52–72 (VIGVALAGIMLVCGIGNFVFI). Topologically, residues 73–86 (AALARYKKLRNLTN) are cytoplasmic. The helical transmembrane segment at 87-107 (LLIANLAISDFLVAIVCCPFE) threads the bilayer. Residues 108–133 (MDYYVVRQLSWAHGHVLCASVNYLRT) lie on the Extracellular side of the membrane. C125 and C205 are oxidised to a cystine. A helical transmembrane segment spans residues 134-154 (VSLYVSTNALLAIAIDRYLAI). The Cytoplasmic segment spans residues 155–168 (VHPLKPRMNYQTAS). A helical transmembrane segment spans residues 169–189 (FLIALVWMVSILIAVPSAYFT). Residues 190-220 (TETILVIVKNQEKIFCGQIWSVDQQLYYKSY) lie on the Extracellular side of the membrane. A helical transmembrane segment spans residues 221–241 (FLFVFGLEFVGPVVTMTLCYA). Over 242–270 (RISQELWFKAVPGFQTEQIRKRLRCRRKT) the chain is Cytoplasmic. Residues 271–291 (VLLLMGILTAYVLCWAPFYGF) traverse the membrane as a helical segment. At 292-310 (TIVRDFFPTVVVKEKHYLT) the chain is on the extracellular side. A helical transmembrane segment spans residues 311-331 (AFYVVECIAMSNSMINTICFV). Over 332-381 (TVKNNTMKYFKKMLRLHWRPSHYGSKSSADLDLKTSGVPATEEVDCIRLK) the chain is Cytoplasmic.

The protein belongs to the G-protein coupled receptor 1 family. Homodimer. Expressed in several regions of the brain, including paraventricular hypothalamic nucleus, dorsal medial hypothalamic nucleus, paratenial thalamic nuclei, paracentral thalamic nucleus, lateral habenular nucleus, lateral septal nucleus, lateral globus pallidus and amygdala. Highest expression seen in paraventricular thalamic nuclei and is also extensively expressed in the suprachiasmatic nucleus.

It is found in the cell membrane. Receptor for prokineticin 2. Exclusively coupled to the G(q) subclass of heteromeric G proteins. Activation leads to mobilization of calcium, stimulation of phosphoinositide turnover and activation of p44/p42 mitogen-activated protein kinase. In Mus musculus (Mouse), this protein is Prokineticin receptor 2 (Prokr2).